Reading from the N-terminus, the 418-residue chain is L-rhamnose isomerase (418 aa).

Residues His262, Asp294, and Asp296 each contribute to the Mn(2+) site.

It belongs to the rhamnose isomerase family. Homotetramer. The cofactor is Mn(2+).

Its subcellular location is the cytoplasm. It catalyses the reaction L-rhamnopyranose = L-rhamnulose. The protein operates within carbohydrate degradation; L-rhamnose degradation; glycerone phosphate from L-rhamnose: step 1/3. Functionally, catalyzes the interconversion of L-rhamnose and L-rhamnulose. The sequence is that of L-rhamnose isomerase from Yersinia pseudotuberculosis serotype O:1b (strain IP 31758).